We begin with the raw amino-acid sequence, 142 residues long: Hemoglobin subunit alpha (142 aa).

Ser1 carries the post-translational modification N-acetylserine. One can recognise a Globin domain in the interval 1–142 (SLSDKDKADV…LALALGQKYR (142 aa)). His58 lines the O2 pocket. His88 lines the heme b pocket.

This sequence belongs to the globin family. In terms of assembly, heterotetramer of two alpha chains and two beta chains. Red blood cells.

Involved in oxygen transport from gills to the various peripheral tissues. The protein is Hemoglobin subunit alpha (hba) of Catostomus clarkii (Desert sucker).